A 318-amino-acid polypeptide reads, in one-letter code: Replication factor C small subunit (318 aa).

43–50 (GSVGTGKT) is an ATP binding site.

It belongs to the activator 1 small subunits family. RfcS subfamily. Heteromultimer composed of small subunits (RfcS) and large subunits (RfcL).

In terms of biological role, part of the RFC clamp loader complex which loads the PCNA sliding clamp onto DNA. The chain is Replication factor C small subunit from Thermoplasma volcanium (strain ATCC 51530 / DSM 4299 / JCM 9571 / NBRC 15438 / GSS1).